A 154-amino-acid chain; its full sequence is Myoglobin (154 aa).

A Globin domain is found at 2 to 148 (GLSEAEWQLV…FRKDIAAKYK (147 aa)). Position 4 is a phosphoserine (Ser4). A nitrite-binding site is contributed by His65. His65 contributes to the O2 binding site. Thr68 is modified (phosphothreonine). His94 is a heme b binding site.

The protein belongs to the globin family. In terms of assembly, monomeric.

The protein localises to the cytoplasm. The protein resides in the sarcoplasm. It carries out the reaction Fe(III)-heme b-[protein] + nitric oxide + H2O = Fe(II)-heme b-[protein] + nitrite + 2 H(+). The catalysed reaction is H2O2 + AH2 = A + 2 H2O. Monomeric heme protein which primary function is to store oxygen and facilitate its diffusion within muscle tissues. Reversibly binds oxygen through a pentacoordinated heme iron and enables its timely and efficient release as needed during periods of heightened demand. Depending on the oxidative conditions of tissues and cells, and in addition to its ability to bind oxygen, it also has a nitrite reductase activity whereby it regulates the production of bioactive nitric oxide. Under stress conditions, like hypoxia and anoxia, it also protects cells against reactive oxygen species thanks to its pseudoperoxidase activity. In Ziphius cavirostris (Cuvier's beaked whale), this protein is Myoglobin (MB).